The following is an 829-amino-acid chain: Protein SEY1 homolog 2 (829 aa).

The interval 1–21 (MDEVSPTKHFTSKPLLPTKTP) is disordered. Over 1 to 728 (MDEVSPTKHF…EKENSEIKYQ (728 aa)) the chain is Cytoplasmic. The region spanning 83 to 305 (GMDYNAVGIL…FLPQYNKEIP (223 aa)) is the GB1/RHD3-type G domain. A GTP-binding site is contributed by 93 to 100 (GAQSSGKS). Coiled-coil stretches lie at residues 372–396 (KKIMTKEIDTAIEKYKEVTERYMES) and 576–596 (DTIEEEIKKSKIDILNIIKEL). Residues 729-749 (IPLYLIVLVIFFGFDEFIAIL) traverse the membrane as a helical segment. Topologically, residues 750–752 (TNP) are lumenal. The helical transmembrane segment at 753-773 (LLFILTLIIGGGIYIGYKLNL) threads the bilayer. The Cytoplasmic segment spans residues 774–829 (GGVAKNYIQYLLSMSLSSTMEYLRTIPFFTPLIDKIWPKDDNKDDDSTEETQEETK).

The protein belongs to the TRAFAC class dynamin-like GTPase superfamily. GB1/RHD3 GTPase family. RHD3 subfamily.

The protein localises to the endoplasmic reticulum membrane. Probable GTP-binding protein that may be involved in cell development. The protein is Protein SEY1 homolog 2 of Entamoeba dispar (strain ATCC PRA-260 / SAW760).